The sequence spans 198 residues: 3-isopropylmalate dehydratase small subunit (198 aa).

It belongs to the LeuD family. LeuD type 1 subfamily. As to quaternary structure, heterodimer of LeuC and LeuD.

The catalysed reaction is (2R,3S)-3-isopropylmalate = (2S)-2-isopropylmalate. The protein operates within amino-acid biosynthesis; L-leucine biosynthesis; L-leucine from 3-methyl-2-oxobutanoate: step 2/4. Functionally, catalyzes the isomerization between 2-isopropylmalate and 3-isopropylmalate, via the formation of 2-isopropylmaleate. This Mycobacterium marinum (strain ATCC BAA-535 / M) protein is 3-isopropylmalate dehydratase small subunit.